The sequence spans 434 residues: Adenylosuccinate synthetase (434 aa).

GTP is bound by residues 22-28 (GDEGKGK) and 50-52 (GHT). The Proton acceptor role is filled by Asp-23. 2 residues coordinate Mg(2+): Asp-23 and Gly-50. Residues 23 to 26 (DEGK), 48 to 51 (NAGH), Thr-139, Arg-153, Gln-234, Thr-249, and Arg-313 contribute to the IMP site. Catalysis depends on His-51, which acts as the Proton donor. 309–315 (ATTGRKR) provides a ligand contact to substrate. Residues Arg-315, 341–343 (KLD), and 423–425 (SVG) contribute to the GTP site.

It belongs to the adenylosuccinate synthetase family. In terms of assembly, homodimer. The cofactor is Mg(2+).

It localises to the cytoplasm. It carries out the reaction IMP + L-aspartate + GTP = N(6)-(1,2-dicarboxyethyl)-AMP + GDP + phosphate + 2 H(+). The protein operates within purine metabolism; AMP biosynthesis via de novo pathway; AMP from IMP: step 1/2. Its function is as follows. Plays an important role in the de novo pathway of purine nucleotide biosynthesis. Catalyzes the first committed step in the biosynthesis of AMP from IMP. The protein is Adenylosuccinate synthetase of Pelodictyon phaeoclathratiforme (strain DSM 5477 / BU-1).